The chain runs to 168 residues: Ribosome maturation factor RimM (168 aa).

The 73-residue stretch at 96-168 folds into the PRC barrel domain; that stretch reads KDEYYWGDLV…RIRVAWQKDW (73 aa).

This sequence belongs to the RimM family. In terms of assembly, binds ribosomal protein uS19.

It localises to the cytoplasm. An accessory protein needed during the final step in the assembly of 30S ribosomal subunit, possibly for assembly of the head region. Essential for efficient processing of 16S rRNA. May be needed both before and after RbfA during the maturation of 16S rRNA. It has affinity for free ribosomal 30S subunits but not for 70S ribosomes. The sequence is that of Ribosome maturation factor RimM from Azoarcus sp. (strain BH72).